Reading from the N-terminus, the 311-residue chain is Pyrimidine-specific ribonucleoside hydrolase RihA (311 aa).

His240 is an active-site residue.

Belongs to the IUNH family. RihA subfamily.

In terms of biological role, hydrolyzes with equal efficiency cytidine or uridine to ribose and cytosine or uracil, respectively. This is Pyrimidine-specific ribonucleoside hydrolase RihA from Escherichia coli O81 (strain ED1a).